Consider the following 57-residue polypeptide: Small ribosomal subunit protein eS31 (57 aa).

Residues Cys-29, Cys-32, Cys-47, and Cys-50 each contribute to the Zn(2+) site. The C4-type zinc-finger motif lies at 29–50; it reads CPRCGPGVFMANHKDRWSCGRC.

The protein belongs to the eukaryotic ribosomal protein eS31 family. Part of the 30S ribosomal subunit. Zn(2+) is required as a cofactor.

This is Small ribosomal subunit protein eS31 from Thermococcus kodakarensis (strain ATCC BAA-918 / JCM 12380 / KOD1) (Pyrococcus kodakaraensis (strain KOD1)).